The chain runs to 448 residues: tRNA modification GTPase MnmE (448 aa).

Residues arginine 24, glutamate 81, and lysine 120 each coordinate (6S)-5-formyl-5,6,7,8-tetrahydrofolate. The 158-residue stretch at glycine 216 to glycine 373 folds into the TrmE-type G domain. K(+) is bound at residue asparagine 226. GTP is bound by residues asparagine 226–serine 231, threonine 245–threonine 251, and aspartate 270–glycine 273. Serine 230 provides a ligand contact to Mg(2+). K(+)-binding residues include threonine 245, isoleucine 247, and threonine 250. Threonine 251 contributes to the Mg(2+) binding site. Lysine 448 is a (6S)-5-formyl-5,6,7,8-tetrahydrofolate binding site.

Belongs to the TRAFAC class TrmE-Era-EngA-EngB-Septin-like GTPase superfamily. TrmE GTPase family. Homodimer. Heterotetramer of two MnmE and two MnmG subunits. The cofactor is K(+).

The protein resides in the cytoplasm. Its function is as follows. Exhibits a very high intrinsic GTPase hydrolysis rate. Involved in the addition of a carboxymethylaminomethyl (cmnm) group at the wobble position (U34) of certain tRNAs, forming tRNA-cmnm(5)s(2)U34. This is tRNA modification GTPase MnmE from Neisseria gonorrhoeae (strain ATCC 700825 / FA 1090).